Here is a 195-residue protein sequence, read N- to C-terminus: Exosome complex component CSL4 (195 aa).

A Phosphoserine modification is found at serine 21. One can recognise an S1 motif domain in the interval 66-147 (DVGAVVTCKV…AQSNYLLTTA (82 aa)).

It belongs to the CSL4 family. In terms of assembly, component of the RNA exosome core complex (Exo-9), composed of EXOSC1, EXOSC2, EXOSC3, EXOSC4, EXOSC5, EXOSC6, EXOSC7, EXOSC8 and EXOSC9; within the complex interacts with EXOSC6. The catalytically inactive RNA exosome core complex (Exo-9) associates with the catalytic subunit EXOSC10/RRP6. Exo-9 may associate with DIS3 to form the nucleolar exosome complex, or DIS3L to form the cytoplasmic exosome complex. Exo-9 is formed by a hexameric base ring consisting of the heterodimers EXOSC4-EXOSC9, EXOSC5-EXOSC8 and EXOSC6-EXOSC7, and a cap ring consisting of EXOSC1, EXOSC2 and EXOSC3. The RNA exosome complex associates with cofactors C1D/RRP47, MPHOSPH6/MPP6 and MTREX/MTR4. Interacts with DDX60.

It is found in the nucleus. Its subcellular location is the nucleolus. The protein localises to the cytoplasm. Its function is as follows. Non-catalytic component of the RNA exosome complex which has 3'-&gt;5' exoribonuclease activity and participates in a multitude of cellular RNA processing and degradation events. In the nucleus, the RNA exosome complex is involved in proper maturation of stable RNA species such as rRNA, snRNA and snoRNA, in the elimination of RNA processing by-products and non-coding 'pervasive' transcripts, such as antisense RNA species and promoter-upstream transcripts (PROMPTs), and of mRNAs with processing defects, thereby limiting or excluding their export to the cytoplasm. The RNA exosome may be involved in Ig class switch recombination (CSR) and/or Ig variable region somatic hypermutation (SHM) by targeting AICDA deamination activity to transcribed dsDNA substrates. In the cytoplasm, the RNA exosome complex is involved in general mRNA turnover and specifically degrades inherently unstable mRNAs containing AU-rich elements (AREs) within their 3' untranslated regions, and in RNA surveillance pathways, preventing translation of aberrant mRNAs. It seems to be involved in degradation of histone mRNA. The catalytic inactive RNA exosome core complex of 9 subunits (Exo-9) is proposed to play a pivotal role in the binding and presentation of RNA for ribonucleolysis, and to serve as a scaffold for the association with catalytic subunits and accessory proteins or complexes. EXOSC1 as peripheral part of the Exo-9 complex stabilizes the hexameric ring of RNase PH-domain subunits through contacts with EXOSC6 and EXOSC8. The chain is Exosome complex component CSL4 (Exosc1) from Mus musculus (Mouse).